Reading from the N-terminus, the 60-residue chain is MMAKTIKVTQVRSSIARLPKHKATLRGLGLRRINHTIELIDTPAIRGMINQVSYMVKVEE.

This sequence belongs to the universal ribosomal protein uL30 family. As to quaternary structure, part of the 50S ribosomal subunit.

The sequence is that of Large ribosomal subunit protein uL30 from Histophilus somni (strain 2336) (Haemophilus somnus).